The chain runs to 983 residues: ABC transporter A family member 2 (983 aa).

6 consecutive transmembrane segments (helical) span residues 33-53 (FLQL…QAAM), 221-241 (IVAL…FGFV), 279-299 (ILTA…QFDF), 305-325 (FPVV…LAFM), 339-359 (VGFF…SGFP), and 416-436 (VLTI…WFVL). The ABC transporter domain occupies 518–763 (VQIRGLAKTY…FGTGFIANIS (246 aa)). Position 564 to 571 (564 to 571 (GPNGAGKT)) interacts with ATP. The interval 963–983 (RSGSTSSRRFSRSGSSRRFSS) is disordered.

Belongs to the ABC transporter superfamily. ABCA family. CPR flippase (TC 3.A.1.211) subfamily.

The protein localises to the membrane. The sequence is that of ABC transporter A family member 2 (ABCA2) from Arabidopsis thaliana (Mouse-ear cress).